Reading from the N-terminus, the 542-residue chain is Chaperonin GroEL 5 (542 aa).

ATP is bound by residues 30–33 (TLGP), K51, 87–91 (DGTTT), G415, and D496.

This sequence belongs to the chaperonin (HSP60) family. In terms of assembly, forms a cylinder of 14 subunits composed of two heptameric rings stacked back-to-back. Interacts with the co-chaperonin GroES.

The protein resides in the cytoplasm. It carries out the reaction ATP + H2O + a folded polypeptide = ADP + phosphate + an unfolded polypeptide.. Together with its co-chaperonin GroES, plays an essential role in assisting protein folding. The GroEL-GroES system forms a nano-cage that allows encapsulation of the non-native substrate proteins and provides a physical environment optimized to promote and accelerate protein folding. The sequence is that of Chaperonin GroEL 5 from Rhizobium meliloti (strain 1021) (Ensifer meliloti).